We begin with the raw amino-acid sequence, 471 residues long: Mannose-1-phosphate guanylyltransferase (471 aa).

The protein belongs to the mannose-6-phosphate isomerase type 2 family.

The catalysed reaction is alpha-D-mannose 1-phosphate + GTP + H(+) = GDP-alpha-D-mannose + diphosphate. Its pathway is nucleotide-sugar biosynthesis; GDP-alpha-D-mannose biosynthesis; GDP-alpha-D-mannose from alpha-D-mannose 1-phosphate (GTP route): step 1/1. Its function is as follows. Involved in the biosynthesis of the K2 capsular polysaccharide biosynthesis. The protein is Mannose-1-phosphate guanylyltransferase (manC) of Klebsiella pneumoniae.